The sequence spans 700 residues: Elongation factor G (700 aa).

A tr-type G domain is found at 10-286; it reads NKVRNIGIMA…AVIDYLPNPL (277 aa). GTP contacts are provided by residues 19–26, 83–87, and 137–140; these read AHIDAGKT, DTPGH, and NKMD.

It belongs to the TRAFAC class translation factor GTPase superfamily. Classic translation factor GTPase family. EF-G/EF-2 subfamily.

The protein resides in the cytoplasm. Catalyzes the GTP-dependent ribosomal translocation step during translation elongation. During this step, the ribosome changes from the pre-translocational (PRE) to the post-translocational (POST) state as the newly formed A-site-bound peptidyl-tRNA and P-site-bound deacylated tRNA move to the P and E sites, respectively. Catalyzes the coordinated movement of the two tRNA molecules, the mRNA and conformational changes in the ribosome. The polypeptide is Elongation factor G (Rhodococcus erythropolis (strain PR4 / NBRC 100887)).